A 255-amino-acid chain; its full sequence is Hydroxyacylglutathione hydrolase (255 aa).

The Zn(2+) site is built by His-56, His-58, Asp-60, His-61, His-114, Asp-133, and His-171.

Belongs to the metallo-beta-lactamase superfamily. Glyoxalase II family. In terms of assembly, monomer. The cofactor is Zn(2+).

It carries out the reaction an S-(2-hydroxyacyl)glutathione + H2O = a 2-hydroxy carboxylate + glutathione + H(+). It functions in the pathway secondary metabolite metabolism; methylglyoxal degradation; (R)-lactate from methylglyoxal: step 2/2. Functionally, thiolesterase that catalyzes the hydrolysis of S-D-lactoyl-glutathione to form glutathione and D-lactic acid. The chain is Hydroxyacylglutathione hydrolase from Rhodopseudomonas palustris (strain BisB18).